The primary structure comprises 473 residues: 1-aminocyclopropane-1-carboxylate synthase (473 aa).

Substrate-binding positions include Asp-84–Tyr-85, Tyr-145, and Asp-151. An N6-(pyridoxal phosphate)lysine modification is found at Lys-273.

This sequence belongs to the class-I pyridoxal-phosphate-dependent aminotransferase family. Homodimer. Pyridoxal 5'-phosphate serves as cofactor.

It catalyses the reaction S-adenosyl-L-methionine = 1-aminocyclopropane-1-carboxylate + S-methyl-5'-thioadenosine + H(+). It carries out the reaction (2S)-2-amino-3-butenoate + H2O = 2-oxobutanoate + NH4(+). It functions in the pathway alkene biosynthesis; ethylene biosynthesis via S-adenosyl-L-methionine; ethylene from S-adenosyl-L-methionine: step 1/2. Inhibited by L-aminoethoxyvinylglycine (AVG). Inhibited by L-vinylglycine (L-VG). Inhibited by S-methylmethionine through a L-VG ketimine intermediate. Its function is as follows. Catalyzes the formation of 1-aminocyclopropane-1-carboxylate, a direct precursor of ethylene in higher plants. Also catalyzes the conversion of L-vinylglycine (L-VG) to alpha-ketobutyrate and ammonia. Can use S-methylmethionine as substrate. In Malus domestica (Apple), this protein is 1-aminocyclopropane-1-carboxylate synthase.